A 124-amino-acid polypeptide reads, in one-letter code: Large ribosomal subunit protein uL22c (124 aa).

The protein belongs to the universal ribosomal protein uL22 family. In terms of assembly, part of the 50S ribosomal subunit.

It localises to the plastid. Its subcellular location is the chloroplast. This protein binds specifically to 23S rRNA. Functionally, the globular domain of the protein is located near the polypeptide exit tunnel on the outside of the subunit, while an extended beta-hairpin is found that lines the wall of the exit tunnel in the center of the 70S ribosome. In Amborella trichopoda, this protein is Large ribosomal subunit protein uL22c (rpl22).